The chain runs to 103 residues: Large ribosomal subunit protein bL21 (103 aa).

The protein belongs to the bacterial ribosomal protein bL21 family. As to quaternary structure, part of the 50S ribosomal subunit. Contacts protein L20.

In terms of biological role, this protein binds to 23S rRNA in the presence of protein L20. The polypeptide is Large ribosomal subunit protein bL21 (Mannheimia succiniciproducens (strain KCTC 0769BP / MBEL55E)).